The primary structure comprises 116 residues: Large ribosomal subunit protein eL22A (116 aa).

It belongs to the eukaryotic ribosomal protein eL22 family.

This Dictyostelium discoideum (Social amoeba) protein is Large ribosomal subunit protein eL22A (rpl22).